Reading from the N-terminus, the 473-residue chain is Spliceosome-associated protein CWC27 homolog (473 aa).

Position 2 is an N-acetylserine (Ser-2). In terms of domain architecture, PPIase cyclophilin-type spans 11-166 (TNGKVLLKTT…NSHKIRSCEV (156 aa)). Over residues 178 to 193 (EIKKPKKEKPEEEVKK) the composition is skewed to basic and acidic residues. 3 disordered regions span residues 178 to 197 (EIKK…LKPK), 203 to 383 (SLLS…TSRE), and 401 to 473 (IAET…KERR). Positions 206–230 (SFGEEAEEEEEEVNRVSQSMKGKSK) form a coiled coil. Basic and acidic residues predominate over residues 231–241 (SSHDLLKDDPH). The Cell attachment site signature appears at 252–254 (RGD). Residues 256–266 (AEDSDDDGEYE) show a composition bias toward acidic residues. 2 stretches are compositionally biased toward basic and acidic residues: residues 267–348 (GAEH…KRSE) and 360–372 (EYRR…EALR). The stretch at 311–378 (VSRSEELRKE…EALRKQQAKT (68 aa)) forms a coiled coil. Ser-347 carries the phosphoserine modification. Acidic residues predominate over residues 405–419 (PENDISETEVEDDEG). Composition is skewed to basic and acidic residues over residues 426 to 438 (QFED…KDAS) and 458 to 473 (RREE…KERR).

The protein belongs to the cyclophilin-type PPIase family. In terms of assembly, part of the activated spliceosome B/catalytic step 1 spliceosome, one of the forms of the spliceosome which has a well-formed active site but still cannot catalyze the branching reaction and is composed at least of 52 proteins, the U2, U5 and U6 snRNAs and the pre-mRNA. Recruited during early steps of activated spliceosome B maturation, it is probably one of the first proteins released from this complex as he matures to the spliceosome C complex. Component of the minor spliceosome, which splices U12-type introns.

It localises to the nucleus. In terms of biological role, as part of the spliceosome, plays a role in pre-mRNA splicing. Probable inactive PPIase with no peptidyl-prolyl cis-trans isomerase activity. As a component of the minor spliceosome, involved in the splicing of U12-type introns in pre-mRNAs. This chain is Spliceosome-associated protein CWC27 homolog, found in Bos taurus (Bovine).